Reading from the N-terminus, the 684-residue chain is Collagen alpha-3(IX) chain (684 aa).

An N-terminal signal peptide occupies residues 1–25; it reads MAGPRACAPLLLLLLLGELLAAAGA. 2 disordered regions span residues 26 to 521 and 548 to 665; these read QRVG…KEAS and LAPG…CDTS. The segment at 29-519 is triple-helical region 3 (COL3); it reads GLPGPPGPPG…TGKPGVPGKE (491 aa). 2 stretches are compositionally biased toward pro residues: residues 31–42 and 55–64; these read PGPPGPPGPPGK and PGLPGPPGPK. The segment covering 66–82 has biased composition (low complexity); that stretch reads APGKPGKPGEAGLPGLP. Residues 130–139 show a composition bias toward gly residues; the sequence is GPPGGIGLRG. Pro residues-rich tracts occupy residues 140-161 and 177-188; these read PPGP…PPGH and ICPPGPPGPPGM. Residues 200-212 are compositionally biased toward basic and acidic residues; it reads EQGEVGKDGEKGD. Residues 221 to 237 are compositionally biased toward low complexity; it reads LPGSVGLQGPRGLRGLP. Composition is skewed to basic and acidic residues over residues 264-282 and 344-356; these read AGDR…KGDL and SKGE…RAGE. A Cell attachment site motif is present at residues 423–425; it reads RGD. The N-linked (GlcNAc...) asparagine glycan is linked to N483. Positions 498–507 are enriched in low complexity; it reads LGLQGVPGVP. The interval 520–550 is nonhelical region 3 (NC3); sequence ASEQRIRELCGGMISEQIAQLAAHLRKPLAP. The interval 551–630 is triple-helical region 2 (COL2); sequence GSIGRPGPAG…QGPQGVPGTS (80 aa). Pro residues predominate over residues 558–568; sequence PAGPPGPPGPP. Low complexity predominate over residues 570–586; that stretch reads SIGHPGARGPPGYRGPT. Positions 601–603 match the Cell attachment site motif; that stretch reads RGD. Residues 617–628 show a composition bias toward low complexity; it reads DQGPQGPQGVPG. The segment at 631–632 is nonhelical region 2 (NC2); sequence KD. The triple-helical region 1 (COL1) stretch occupies residues 633 to 661; it reads GQDGAPGEPGPPGDPGLPGAIGAQGTPGI. The segment at 662–684 is nonhelical region 1 (NC1); sequence CDTSACQGAVLGGVGEKSGSRSS.

The protein belongs to the fibril-associated collagens with interrupted helices (FACIT) family. As to quaternary structure, heterotrimer of an alpha 1(IX), an alpha 2(IX) and an alpha 3(IX) chain. Covalently linked to the telopeptides of type II collagen by lysine-derived cross-links. Post-translationally, prolines at the third position of the tripeptide repeating unit (G-X-Y) are hydroxylated in some or all of the chains.

The protein resides in the secreted. It localises to the extracellular space. Its subcellular location is the extracellular matrix. Structural component of hyaline cartilage and vitreous of the eye. This Homo sapiens (Human) protein is Collagen alpha-3(IX) chain (COL9A3).